We begin with the raw amino-acid sequence, 369 residues long: Anhydro-N-acetylmuramic acid kinase (369 aa).

12–19 provides a ligand contact to ATP; the sequence is GTSMDGVD.

Belongs to the anhydro-N-acetylmuramic acid kinase family.

It carries out the reaction 1,6-anhydro-N-acetyl-beta-muramate + ATP + H2O = N-acetyl-D-muramate 6-phosphate + ADP + H(+). It functions in the pathway amino-sugar metabolism; 1,6-anhydro-N-acetylmuramate degradation. Its pathway is cell wall biogenesis; peptidoglycan recycling. In terms of biological role, catalyzes the specific phosphorylation of 1,6-anhydro-N-acetylmuramic acid (anhMurNAc) with the simultaneous cleavage of the 1,6-anhydro ring, generating MurNAc-6-P. Is required for the utilization of anhMurNAc either imported from the medium or derived from its own cell wall murein, and thus plays a role in cell wall recycling. This is Anhydro-N-acetylmuramic acid kinase from Shewanella sp. (strain ANA-3).